The chain runs to 290 residues: 4-hydroxybenzoate octaprenyltransferase (290 aa).

8 consecutive transmembrane segments (helical) span residues Ile23 to Val43, Leu46 to Val66, Leu99 to Ile119, Leu141 to Val161, Glu163 to Tyr183, Leu213 to Asn233, Gly234 to Gln254, and Ala268 to Trp288.

Belongs to the UbiA prenyltransferase family. The cofactor is Mg(2+).

It is found in the cell inner membrane. It carries out the reaction all-trans-octaprenyl diphosphate + 4-hydroxybenzoate = 4-hydroxy-3-(all-trans-octaprenyl)benzoate + diphosphate. Its pathway is cofactor biosynthesis; ubiquinone biosynthesis. Its function is as follows. Catalyzes the prenylation of para-hydroxybenzoate (PHB) with an all-trans polyprenyl group. Mediates the second step in the final reaction sequence of ubiquinone-8 (UQ-8) biosynthesis, which is the condensation of the polyisoprenoid side chain with PHB, generating the first membrane-bound Q intermediate 3-octaprenyl-4-hydroxybenzoate. This chain is 4-hydroxybenzoate octaprenyltransferase, found in Escherichia coli (strain UTI89 / UPEC).